Here is a 282-residue protein sequence, read N- to C-terminus: tRNA (guanine-N(1)-)-methyltransferase (282 aa).

The segment at 77 to 114 (TGPAATVSDLESSAEHKRNLRPATTNGDAEPLGEKAGG) is disordered. S-adenosyl-L-methionine contacts are provided by residues G149 and 173–178 (IGDYVL).

This sequence belongs to the RNA methyltransferase TrmD family. In terms of assembly, homodimer.

Its subcellular location is the cytoplasm. It catalyses the reaction guanosine(37) in tRNA + S-adenosyl-L-methionine = N(1)-methylguanosine(37) in tRNA + S-adenosyl-L-homocysteine + H(+). Its function is as follows. Specifically methylates guanosine-37 in various tRNAs. The protein is tRNA (guanine-N(1)-)-methyltransferase of Corynebacterium jeikeium (strain K411).